Reading from the N-terminus, the 158-residue chain is Ribosome-binding factor A (158 aa).

The disordered stretch occupies residues 130–158; the sequence is TAQYAGDADPYKHDDEAEAEGDEFESDEE. The segment covering 145–158 has biased composition (acidic residues); sequence EAEAEGDEFESDEE.

The protein belongs to the RbfA family. As to quaternary structure, monomer. Binds 30S ribosomal subunits, but not 50S ribosomal subunits or 70S ribosomes.

Its subcellular location is the cytoplasm. Its function is as follows. One of several proteins that assist in the late maturation steps of the functional core of the 30S ribosomal subunit. Associates with free 30S ribosomal subunits (but not with 30S subunits that are part of 70S ribosomes or polysomes). Required for efficient processing of 16S rRNA. May interact with the 5'-terminal helix region of 16S rRNA. This chain is Ribosome-binding factor A, found in Bifidobacterium longum subsp. infantis (strain ATCC 15697 / DSM 20088 / JCM 1222 / NCTC 11817 / S12).